The primary structure comprises 244 residues: MPDMSQLKELPFSTLQFYATAPYPCSYLPGRQARSQVAAPGHLINTGTYSQLVEQGFRRSGLFTYRPHCDNCHACVPVRVDAARFEPNRTQRRAWRSHQALRAFVAELAWSPEHYDLYTRYQQGRHPGGGMDEDSRTQYAQFLLTTRVNTRLVKFRTPQGQLAMISIIDVLDDGLSSVYTFYDPDMAGSLGTYSILWQIEQCRTLDLPWLYLGYWIADSRKMAYKANFRPLQMHVDGAWRETPP.

Belongs to the R-transferase family. Bpt subfamily.

The protein localises to the cytoplasm. The enzyme catalyses N-terminal L-glutamyl-[protein] + L-leucyl-tRNA(Leu) = N-terminal L-leucyl-L-glutamyl-[protein] + tRNA(Leu) + H(+). It catalyses the reaction N-terminal L-aspartyl-[protein] + L-leucyl-tRNA(Leu) = N-terminal L-leucyl-L-aspartyl-[protein] + tRNA(Leu) + H(+). Functions in the N-end rule pathway of protein degradation where it conjugates Leu from its aminoacyl-tRNA to the N-termini of proteins containing an N-terminal aspartate or glutamate. The protein is Aspartate/glutamate leucyltransferase of Bordetella parapertussis (strain 12822 / ATCC BAA-587 / NCTC 13253).